Consider the following 491-residue polypeptide: Katanin p60 ATPase-containing subunit A1 (491 aa).

Positions 1 to 29 are interaction with KATNB1; it reads MSLLMITENVKLAREYALLGNYDSAMVYY. Residues 1 to 75 form an interaction with dynein and NDEL1 region; the sequence is MSLLMITENV…VKEIMKTLES (75 aa). Positions 1-185 are interaction with microtubules; that stretch reads MSLLMITENV…EPEANKFDST (185 aa). Ser-42 is subject to Phosphoserine; by DYRK2. The tract at residues 87–183 is disordered; it reads QHELPSSEGE…VTEPEANKFD (97 aa). Residues 145 to 169 are compositionally biased toward basic and acidic residues; that stretch reads HSDRGKAVRSREKKEQSKGREEKNK. 249–256 serves as a coordination point for ATP; that stretch reads GPPGTGKT.

The protein belongs to the AAA ATPase family. Katanin p60 subunit A1 subfamily. As to quaternary structure, can homooligomerize into hexameric rings, which may be promoted by interaction with microtubules. Interacts with KATNB1, which may serve as a targeting subunit. Interacts with ASPM; the katanin complex formation KATNA1:KATNB1 is required for the association of ASPM. Interacts with dynein and NDEL1. Associates with the E3 ligase complex containing DYRK2, EDD/UBR5, DDB1 and DCAF1 proteins (EDVP complex). Interacts with KLHL42 (via the kelch domains). Interacts with CUL3; the interaction is enhanced by KLHL42. Interacts with KATNB1 and KATNBL1. Post-translationally, phosphorylation by DYRK2 triggers ubiquitination and subsequent degradation. In terms of processing, ubiquitinated by the BCR(KLHL42) E3 ubiquitin ligase complex, leading to its proteasomal degradation. Ubiquitinated by the EDVP E3 ligase complex and subsequently targeted for proteasomal degradation.

The protein localises to the cytoplasm. Its subcellular location is the midbody. The protein resides in the cytoskeleton. It localises to the microtubule organizing center. It is found in the centrosome. The protein localises to the spindle pole. Its subcellular location is the spindle. It carries out the reaction n ATP + n H2O + a microtubule = n ADP + n phosphate + (n+1) alpha/beta tubulin heterodimers.. With respect to regulation, ATPase activity is stimulated by microtubules, which promote homooligomerization. ATP-dependent microtubule severing is stimulated by interaction with KATNB1. In terms of biological role, catalytic subunit of a complex which severs microtubules in an ATP-dependent manner. Microtubule severing may promote rapid reorganization of cellular microtubule arrays and the release of microtubules from the centrosome following nucleation. Microtubule release from the mitotic spindle poles may allow depolymerization of the microtubule end proximal to the spindle pole, leading to poleward microtubule flux and poleward motion of chromosome. Microtubule release within the cell body of neurons may be required for their transport into neuronal processes by microtubule-dependent motor proteins. This transport is required for axonal growth. This Rattus norvegicus (Rat) protein is Katanin p60 ATPase-containing subunit A1 (Katna1).